The chain runs to 305 residues: Methionyl-tRNA formyltransferase (305 aa).

111–114 lines the (6S)-5,6,7,8-tetrahydrofolate pocket; the sequence is SLLP.

It belongs to the Fmt family.

The enzyme catalyses L-methionyl-tRNA(fMet) + (6R)-10-formyltetrahydrofolate = N-formyl-L-methionyl-tRNA(fMet) + (6S)-5,6,7,8-tetrahydrofolate + H(+). Attaches a formyl group to the free amino group of methionyl-tRNA(fMet). The formyl group appears to play a dual role in the initiator identity of N-formylmethionyl-tRNA by promoting its recognition by IF2 and preventing the misappropriation of this tRNA by the elongation apparatus. The polypeptide is Methionyl-tRNA formyltransferase (Helicobacter pylori (strain J99 / ATCC 700824) (Campylobacter pylori J99)).